The chain runs to 84 residues: Acyl carrier protein (84 aa).

Positions 6-81 (EEILTGLAEI…DAVDYIANAT (76 aa)) constitute a Carrier domain. O-(pantetheine 4'-phosphoryl)serine is present on Ser41.

It belongs to the acyl carrier protein (ACP) family. 4'-phosphopantetheine is transferred from CoA to a specific serine of apo-ACP by AcpS. This modification is essential for activity because fatty acids are bound in thioester linkage to the sulfhydryl of the prosthetic group.

It localises to the cytoplasm. The protein operates within lipid metabolism; fatty acid biosynthesis. Carrier of the growing fatty acid chain in fatty acid biosynthesis. The chain is Acyl carrier protein from Acidothermus cellulolyticus (strain ATCC 43068 / DSM 8971 / 11B).